Consider the following 227-residue polypeptide: MLLPYNEWRHVFKLDPAKEIEEAALQAIATSGTDAIIVGGTDDITLDATLDLLMRLRRYPVAVALEVSELEAATMGFDAYLTPSVLNSGTLEHVIDKQVEALEEVGHMLAHQDLVGEGYIVLNADAKVARVTQAKLLNDDQVVAYAQLADSVFRMPIIYLEYSGMYGDPSLVASVKRVLKQGRLFYGGGIDSIERAQEMLTHADTIVVGNIIYDNLEAALATVAATR.

K13 lines the sn-glycerol 1-phosphate pocket. Positions 15 and 41 each coordinate Mg(2+). Sn-glycerol 1-phosphate contacts are provided by residues 159–164 (YLEYSG), G189, and 209–210 (GN).

It belongs to the GGGP/HepGP synthase family. Group I subfamily. In terms of assembly, homodimer. It depends on Mg(2+) as a cofactor.

It catalyses the reaction sn-glycerol 1-phosphate + all-trans-heptaprenyl diphosphate = 3-heptaprenyl-sn-glycero-1-phosphate + diphosphate. It participates in membrane lipid metabolism; glycerophospholipid metabolism. Prenyltransferase that catalyzes in vivo the transfer of the heptaprenyl moiety of heptaprenyl pyrophosphate (HepPP; 35 carbon atoms) to the C3 hydroxyl of sn-glycerol-1-phosphate (G1P), producing heptaprenylglyceryl phosphate (HepGP). This reaction is an ether-bond-formation step in the biosynthesis of archaea-type G1P-based membrane lipids found in Bacillales. The chain is Heptaprenylglyceryl phosphate synthase from Exiguobacterium sibiricum (strain DSM 17290 / CCUG 55495 / CIP 109462 / JCM 13490 / 255-15).